We begin with the raw amino-acid sequence, 338 residues long: DNA-directed RNA polymerase subunit alpha (338 aa).

The interval M1–E234 is alpha N-terminal domain (alpha-NTD). The alpha C-terminal domain (alpha-CTD) stretch occupies residues F250–I338.

The protein belongs to the RNA polymerase alpha chain family. In terms of assembly, homodimer. The RNAP catalytic core consists of 2 alpha, 1 beta, 1 beta' and 1 omega subunit. When a sigma factor is associated with the core the holoenzyme is formed, which can initiate transcription.

It catalyses the reaction RNA(n) + a ribonucleoside 5'-triphosphate = RNA(n+1) + diphosphate. DNA-dependent RNA polymerase catalyzes the transcription of DNA into RNA using the four ribonucleoside triphosphates as substrates. The chain is DNA-directed RNA polymerase subunit alpha from Caulobacter vibrioides (strain ATCC 19089 / CIP 103742 / CB 15) (Caulobacter crescentus).